Reading from the N-terminus, the 471-residue chain is 6-phosphofructo-2-kinase/fructose-2,6-bisphosphatase 1 (471 aa).

N-acetylserine is present on S2. Residues 2–250 (SPEMGELTQT…VYYLMNIHVT (249 aa)) are 6-phosphofructo-2-kinase. Residue S33 is modified to Phosphoserine; by PKA. An ATP-binding site is contributed by 49 to 57 (GLPARGKTY). Residues R82 and R105 each contribute to the beta-D-fructose 6-phosphate site. The active site involves D131. T133 and R139 together coordinate beta-D-fructose 6-phosphate. S141 carries the post-translational modification Phosphoserine. C161 is an active-site residue. 170–175 (NIRQVK) is a binding site for ATP. K175, R196, and Y200 together coordinate beta-D-fructose 6-phosphate. The fructose-2,6-bisphosphatase stretch occupies residues 251-471 (PRSIYLCRHG…EALDTVPAHY (221 aa)). Residue R258 coordinates beta-D-fructose 2,6-bisphosphate. H259 functions as the Tele-phosphohistidine intermediate in the catalytic mechanism. N265, G271, and R308 together coordinate beta-D-fructose 2,6-bisphosphate. E328 functions as the Proton donor/acceptor in the catalytic mechanism. Beta-D-fructose 2,6-bisphosphate contacts are provided by Y339, R353, K357, Y368, Q394, and R398. 350–353 (FALR) is an ATP binding site. Residues 394–398 (QAVMR) and Y430 contribute to the ATP site.

The protein in the C-terminal section; belongs to the phosphoglycerate mutase family. Homodimer. Liver.

It carries out the reaction beta-D-fructose 2,6-bisphosphate + H2O = beta-D-fructose 6-phosphate + phosphate. The enzyme catalyses beta-D-fructose 6-phosphate + ATP = beta-D-fructose 2,6-bisphosphate + ADP + H(+). Its activity is regulated as follows. Phosphorylation at Ser-33 inhibits the kinase and activates the bisphosphatase. Synthesis and degradation of fructose 2,6-bisphosphate. The polypeptide is 6-phosphofructo-2-kinase/fructose-2,6-bisphosphatase 1 (Homo sapiens (Human)).